We begin with the raw amino-acid sequence, 499 residues long: Membrane-associated tyrosine- and threonine-specific cdc2-inhibitory kinase (499 aa).

N-acetylmethionine is present on M1. The segment at 1-29 is disordered; the sequence is MLERPPALAMPMPTEGTPPPLSGTPIPVP. Positions 16–28 are enriched in pro residues; the sequence is GTPPPLSGTPIPV. T17 carries the phosphothreonine modification. Position 40 is a phosphoserine (S40). The tract at residues 42–72 is disordered; that stretch reads KRPRGLSRSLPPPPPAKGSIPISRLFPPRTP. 2 positions are modified to phosphoserine: S94 and S120. Positions 110–359 constitute a Protein kinase domain; sequence FQRLSRLGHG…AEALLALPVL (250 aa). ATP is bound by residues 116–124 and K139; that span reads LGHGSYGEV. Residues S143 and S160 each carry the phosphoserine modification. D233 (proton acceptor) is an active-site residue. Mg(2+)-binding residues include N238, D251, and G253. The Membrane-association motif signature appears at 382–398; sequence LWQALLALLCWLWHGLA. An interaction with PIN1 region spans residues 398-499; that stretch reads AHPASWLQPL…SLFEDTLDPT (102 aa). Residue S426 is modified to Phosphoserine; by PLK1. Residues 437-499 are interaction with CDC2-CCNB1; the sequence is GPSLSPEAVL…SLFEDTLDPT (63 aa). Residues 451-485 are disordered; sequence GSTSTPRSRCTPRDALDLSDINSEPPRGSFPSFEP. Phosphoserine is present on residues S469, S473, and S482. Phosphothreonine; by PLK1 is present on T495.

This sequence belongs to the protein kinase superfamily. Ser/Thr protein kinase family. WEE1 subfamily. In terms of assembly, interacts with CDC2-CCNB1 complex. Can also interact with PIN1 when phosphorylated by CDC2-CCNB1. In terms of processing, autophosphorylated. Phosphorylated by CDC2-CCNB1 complexes on undefined serine and threonine residues. The phosphorylation by CDC2-CCNB1 complexes may inhibit the catalytic activity.

The protein localises to the endoplasmic reticulum membrane. Its subcellular location is the golgi apparatus membrane. The enzyme catalyses L-seryl-[protein] + ATP = O-phospho-L-seryl-[protein] + ADP + H(+). It carries out the reaction L-threonyl-[protein] + ATP = O-phospho-L-threonyl-[protein] + ADP + H(+). Its activity is regulated as follows. Negatively regulated by hyperphosphorylation during mitosis. The hyperphosphorylated form does not associate with CCNB1-CDC2 complexes. The PLK1 protein kinase may be required for mitotic phosphorylation. Functionally, acts as a negative regulator of entry into mitosis (G2 to M transition) by phosphorylation of the CDK1 kinase specifically when CDK1 is complexed to cyclins. Mediates phosphorylation of CDK1 predominantly on 'Thr-14'. Also involved in Golgi fragmentation. May be involved in phosphorylation of CDK1 on 'Tyr-15' to a lesser degree, however tyrosine kinase activity is unclear and may be indirect. In Homo sapiens (Human), this protein is Membrane-associated tyrosine- and threonine-specific cdc2-inhibitory kinase (PKMYT1).